Here is a 489-residue protein sequence, read N- to C-terminus: Transcription factor TGAL11 (489 aa).

Residues 87–99 (AATATATARPPAT) show a composition bias toward low complexity. The interval 87 to 181 (AATATATARP…SDHRMTKTLD (95 aa)) is disordered. Over residues 121-139 (SNVTADTTDSESSSKNNGD) the composition is skewed to polar residues. Positions 148-159 (ASQFDQIPQQQQ) are enriched in low complexity. Basic and acidic residues predominate over residues 171–181 (HSDHRMTKTLD). The bZIP domain maps to 181 to 225 (DPKIMRRLAQNREAARKSRLRKKAYIQQLESSKLRLAQMEQDLER). A basic motif region spans residues 183–203 (KIMRRLAQNREAARKSRLRKK). The segment at 209–223 (LESSKLRLAQMEQDL) is leucine-zipper. Residues 245–460 (AAMFDAEYGR…RALSSLWASR (216 aa)) enclose the DOG1 domain.

Belongs to the bZIP family.

It localises to the nucleus. Functionally, transcriptional regulator involved in defense response. The protein is Transcription factor TGAL11 of Oryza sativa subsp. japonica (Rice).